The chain runs to 126 residues: Histone H2B type 1-K (126 aa).

Low complexity predominate over residues 1–12 (MPEPAKSAPAPK). Positions 1-36 (MPEPAKSAPAPKKGSKKAVTKAQKKDGKKRKRSRKE) are disordered. Proline 2 bears the N-acetylproline mark. Residue glutamate 3 is modified to ADP-ribosyl glutamic acid. At lysine 6 the chain carries N6-(2-hydroxyisobutyryl)lysine; alternate. An N6-(beta-hydroxybutyryl)lysine; alternate modification is found at lysine 6. Lysine 6 is subject to N6-acetyllysine; alternate. Lysine 6 carries the post-translational modification N6-butyryllysine; alternate. N6-crotonyllysine; alternate is present on lysine 6. Lysine 6 bears the N6-lactoyllysine; alternate mark. A Glycyl lysine isopeptide (Lys-Gly) (interchain with G-Cter in SUMO2); alternate cross-link involves residue lysine 6. An ADP-ribosylserine modification is found at serine 7. Lysine 12 is subject to N6-(beta-hydroxybutyryl)lysine; alternate. N6-acetyllysine; alternate is present on residues lysine 12 and lysine 13. An N6-crotonyllysine; alternate mark is found at lysine 12 and lysine 13. Lysine 12 carries the N6-lactoyllysine; alternate modification. An N6-(2-hydroxyisobutyryl)lysine; alternate modification is found at lysine 13. A Phosphoserine; by STK4/MST1 modification is found at serine 15. N6-acetyllysine; alternate is present on residues lysine 16, lysine 17, lysine 21, and lysine 24. Lysine 16, lysine 17, lysine 21, and lysine 24 each carry N6-crotonyllysine; alternate. Residues lysine 16, lysine 17, lysine 21, and lysine 24 each carry the N6-lactoyllysine; alternate modification. Residue lysine 17 is modified to N6-glutaryllysine; alternate. Residues lysine 21 and lysine 24 each carry the N6-(2-hydroxyisobutyryl)lysine; alternate modification. Lysine 21 is modified (N6-(beta-hydroxybutyryl)lysine; alternate). At lysine 21 the chain carries N6-butyryllysine; alternate. Residue lysine 21 forms a Glycyl lysine isopeptide (Lys-Gly) (interchain with G-Cter in SUMO2); alternate linkage. An N6-(2-hydroxyisobutyryl)lysine modification is found at lysine 25. Lysine 35 carries the post-translational modification N6-(2-hydroxyisobutyryl)lysine; alternate. Position 35 is an N6-(beta-hydroxybutyryl)lysine; alternate (lysine 35). Lysine 35 carries the post-translational modification N6-crotonyllysine; alternate. Residue lysine 35 is modified to N6-glutaryllysine; alternate. Lysine 35 is subject to N6-succinyllysine; alternate. Lysine 35 participates in a covalent cross-link: Glycyl lysine isopeptide (Lys-Gly) (interchain with G-Cter in ubiquitin); alternate. Glutamate 36 carries the post-translational modification PolyADP-ribosyl glutamic acid. Phosphoserine; by AMPK is present on serine 37. 3 positions are modified to N6-(2-hydroxyisobutyryl)lysine; alternate: lysine 44, lysine 47, and lysine 58. Lysine 44 carries the N6-lactoyllysine; alternate modification. Lysine 44 and lysine 47 each carry N6-glutaryllysine; alternate. Lysine 47 is subject to N6-methyllysine; alternate. At lysine 58 the chain carries N6,N6-dimethyllysine; alternate. At arginine 80 the chain carries Dimethylated arginine. Residue lysine 86 is modified to N6-(2-hydroxyisobutyryl)lysine; alternate. Lysine 86 bears the N6-acetyllysine; alternate mark. Lysine 86 is modified (N6-lactoyllysine; alternate). Lysine 86 is subject to N6,N6,N6-trimethyllysine; alternate. Omega-N-methylarginine is present on residues arginine 87 and arginine 93. Lysine 109 is subject to N6-(2-hydroxyisobutyryl)lysine; alternate. Lysine 109 carries the post-translational modification N6-lactoyllysine; alternate. Residue lysine 109 is modified to N6-glutaryllysine; alternate. N6-methyllysine; alternate is present on lysine 109. The O-linked (GlcNAc) serine glycan is linked to serine 113. Position 116 is a phosphothreonine (threonine 116). 2 positions are modified to N6-(2-hydroxyisobutyryl)lysine; alternate: lysine 117 and lysine 121. Lysine 117 is modified (N6-(beta-hydroxybutyryl)lysine; alternate). Lysine 117 and lysine 121 each carry N6-lactoyllysine; alternate. Lysine 117 and lysine 121 each carry N6-glutaryllysine; alternate. 2 positions are modified to N6-succinyllysine; alternate: lysine 117 and lysine 121. At lysine 117 the chain carries N6-methylated lysine; alternate. A Glycyl lysine isopeptide (Lys-Gly) (interchain with G-Cter in ubiquitin); alternate cross-link involves residue lysine 121.

Belongs to the histone H2B family. The nucleosome is a histone octamer containing two molecules each of H2A, H2B, H3 and H4 assembled in one H3-H4 heterotetramer and two H2A-H2B heterodimers. The octamer wraps approximately 147 bp of DNA. Post-translationally, monoubiquitination at Lys-35 (H2BK34Ub) by the MSL1/MSL2 dimer is required for histone H3 'Lys-4' (H3K4me) and 'Lys-79' (H3K79me) methylation and transcription activation at specific gene loci, such as HOXA9 and MEIS1 loci. Similarly, monoubiquitination at Lys-121 (H2BK120Ub) by the RNF20/40 complex gives a specific tag for epigenetic transcriptional activation and is also prerequisite for histone H3 'Lys-4' and 'Lys-79' methylation. It also functions cooperatively with the FACT dimer to stimulate elongation by RNA polymerase II. H2BK120Ub also acts as a regulator of mRNA splicing: deubiquitination by USP49 is required for efficient cotranscriptional splicing of a large set of exons. Phosphorylated on Ser-15 (H2BS14ph) by STK4/MST1 during apoptosis; which facilitates apoptotic chromatin condensation. Also phosphorylated on Ser-15 in response to DNA double strand breaks (DSBs), and in correlation with somatic hypermutation and immunoglobulin class-switch recombination. Phosphorylation at Ser-37 (H2BS36ph) by AMPK in response to stress promotes transcription. In terms of processing, glcNAcylation at Ser-113 promotes monoubiquitination of Lys-121. It fluctuates in response to extracellular glucose, and associates with transcribed genes. Post-translationally, ADP-ribosylated by PARP1 or PARP2 on Ser-7 (H2BS6ADPr) in response to DNA damage. H2BS6ADPr promotes recruitment of CHD1L. Mono-ADP-ribosylated on Glu-3 (H2BE2ADPr) by PARP3 in response to single-strand breaks. Poly ADP-ribosylation on Glu-36 (H2BE35ADPr) by PARP1 regulates adipogenesis: it inhibits phosphorylation at Ser-37 (H2BS36ph), thereby blocking expression of pro-adipogenetic genes. Crotonylation (Kcr) is specifically present in male germ cells and marks testis-specific genes in post-meiotic cells, including X-linked genes that escape sex chromosome inactivation in haploid cells. Crotonylation marks active promoters and enhancers and confers resistance to transcriptional repressors. It is also associated with post-meiotically activated genes on autosomes. In terms of processing, lactylated in macrophages by EP300/P300 by using lactoyl-CoA directly derived from endogenous or exogenous lactate, leading to stimulates gene transcription.

Its subcellular location is the nucleus. The protein resides in the chromosome. Core component of nucleosome. Nucleosomes wrap and compact DNA into chromatin, limiting DNA accessibility to the cellular machineries which require DNA as a template. Histones thereby play a central role in transcription regulation, DNA repair, DNA replication and chromosomal stability. DNA accessibility is regulated via a complex set of post-translational modifications of histones, also called histone code, and nucleosome remodeling. This Macaca fascicularis (Crab-eating macaque) protein is Histone H2B type 1-K.